Here is a 164-residue protein sequence, read N- to C-terminus: ATP synthase subunit b 1 (164 aa).

Residues 8-28 (PETWVAIAFVILMGLFAYLGV) form a helical membrane-spanning segment.

The protein belongs to the ATPase B chain family. As to quaternary structure, F-type ATPases have 2 components, F(1) - the catalytic core - and F(0) - the membrane proton channel. F(1) has five subunits: alpha(3), beta(3), gamma(1), delta(1), epsilon(1). F(0) has three main subunits: a(1), b(2) and c(10-14). The alpha and beta chains form an alternating ring which encloses part of the gamma chain. F(1) is attached to F(0) by a central stalk formed by the gamma and epsilon chains, while a peripheral stalk is formed by the delta and b chains.

It is found in the cell inner membrane. Its function is as follows. F(1)F(0) ATP synthase produces ATP from ADP in the presence of a proton or sodium gradient. F-type ATPases consist of two structural domains, F(1) containing the extramembraneous catalytic core and F(0) containing the membrane proton channel, linked together by a central stalk and a peripheral stalk. During catalysis, ATP synthesis in the catalytic domain of F(1) is coupled via a rotary mechanism of the central stalk subunits to proton translocation. In terms of biological role, component of the F(0) channel, it forms part of the peripheral stalk, linking F(1) to F(0). The sequence is that of ATP synthase subunit b 1 from Bradyrhizobium sp. (strain ORS 278).